The sequence spans 316 residues: tRNA-cytidine(32) 2-sulfurtransferase (316 aa).

The PP-loop motif signature appears at 58–63 (SGGKDS). [4Fe-4S] cluster contacts are provided by C133, C136, and C224.

The protein belongs to the TtcA family. As to quaternary structure, homodimer. Requires Mg(2+) as cofactor. [4Fe-4S] cluster is required as a cofactor.

It localises to the cytoplasm. It catalyses the reaction cytidine(32) in tRNA + S-sulfanyl-L-cysteinyl-[cysteine desulfurase] + AH2 + ATP = 2-thiocytidine(32) in tRNA + L-cysteinyl-[cysteine desulfurase] + A + AMP + diphosphate + H(+). The protein operates within tRNA modification. Catalyzes the ATP-dependent 2-thiolation of cytidine in position 32 of tRNA, to form 2-thiocytidine (s(2)C32). The sulfur atoms are provided by the cysteine/cysteine desulfurase (IscS) system. The chain is tRNA-cytidine(32) 2-sulfurtransferase from Aromatoleum aromaticum (strain DSM 19018 / LMG 30748 / EbN1) (Azoarcus sp. (strain EbN1)).